The primary structure comprises 82 residues: Transcription elongation factor 1 homolog (82 aa).

Residues C26, C29, C50, and C53 each contribute to the Zn(2+) site.

Belongs to the ELOF1 family.

The protein localises to the nucleus. In terms of biological role, transcription elongation factor implicated in the maintenance of proper chromatin structure in actively transcribed regions. This Manduca sexta (Tobacco hawkmoth) protein is Transcription elongation factor 1 homolog.